Reading from the N-terminus, the 692-residue chain is Furin-like protease kpc-1 (692 aa).

The signal sequence occupies residues 1–33 (MSNISWYRHCSVRLQLVTLALFLLLGSASLGSA). Asn3 carries an N-linked (GlcNAc...) asparagine glycan. Residues 34 to 139 (HIDEEFEDDV…QQVAKRRVKR (106 aa)) constitute a propeptide that is removed on maturation. Over 140–670 (GYRRIRRHTD…RSVQMEATSS (531 aa)) the chain is Lumenal. Residues 152-177 (DIFEEDDDGTQISKSRNRKHPDPNDP) form a disordered region. Residue Asp176 participates in Ca(2+) binding. One can recognise a Peptidase S8 domain in the interval 182 to 503 (MWYLNRGEHH…YGLMDAGAMV (322 aa)). Residue Asp221 is the Charge relay system of the active site. Asp222 is a binding site for substrate. Ca(2+)-binding residues include Asp230, Asp242, Asp247, and Asp249. Residues 230–249 (DISPNYDERASYDVNDRDND) form a disordered region. Position 259–260 (259–260 (EN)) interacts with substrate. His262 acts as the Charge relay system in catalysis. Ile273 provides a ligand contact to Ca(2+). An N-linked (GlcNAc...) asparagine glycan is attached at Asn275. Ca(2+) is bound by residues Asn276, Leu278, and Ile280. 2 disulfides stabilise this stretch: Cys279-Cys428 and Cys371-Cys401. Substrate-binding positions include Glu304, 321–326 (SWGPDD), Asp332, and 360–363 (ASGN). Residue Asp326 coordinates Ca(2+). Ca(2+) is bound at residue Asp369. Substrate is bound by residues Asp374 and Tyr376. Glu399 lines the Ca(2+) pocket. Residue Ser436 is the Charge relay system of the active site. Ser436 serves as a coordination point for substrate. Asn455 and Asn487 each carry an N-linked (GlcNAc...) asparagine glycan. Residues 512–646 (VDEQHRCRQF…ELVLYGTDRE (135 aa)) form the P/Homo B domain. Cys518 and Cys544 form a disulfide bridge. The short motif at 570–572 (RGD) is the Cell attachment site element. A helical membrane pass occupies residues 671–692 (GTQYSIFHVITLVILTFSQILY).

It belongs to the peptidase S8 family. Furin subfamily. Interacts (via extracellular domain) with receptor dma-1 (via extracellular domain); the interaction promotes dma-1 internalization. The cofactor is Ca(2+). As to expression, expressed in the nervous system including the ventral nerve cord, the nerve ring and the retrovesicular ganglion, and in epithelial cells. Expressed in IL2 neurons. Expressed in PVD mechanosensory neurons. Expressed in pharynx with strong expression in the g2 pharyngeal gland cells and vpi pharyngeal intestinal valve cells. Expressed in intestine.

It localises to the cell membrane. The protein resides in the perikaryon. It is found in the cell projection. Its subcellular location is the axon. Functionally, furin-like protease which cleaves proproteins at the RX(K/R)R consensus motif. During neuronal development, regulates the formation and extension of dendrite branches and cellular positioning of various type of neurons. Together with chin-1 and cdc-42, plays a role in the development of the neuropil and is required for the guidance of axons from neurons, including SubL pioneer neurons and AIY interneurons, into the nerve ring. Its role in axon guidance in glia and pioneer neurons may be through ensuring the fmi-1 protein is correctly localized to the nerve ring. Promotes the formation, extension and self-avoidance of dendritic branches of PVD and FLP mechanosensory neurons. In PVD neurons, regulates plasma membrane levels of branching receptor dma-1 by targeting it to late endosomes and thus promotes normal dendrite branching and dendrite self-avoidance. Also controls dendrite extension in AIY and D-type motoneurons, dendrite branching in AQR sensory neurons and VC4/5 motoneurons, the normal number of dendritic branches in AVL neurons and the positioning of HSN and ALM/PLM neurons. Dispensable for maintaining dendrite branching in adults. Also regulates dauer-specific dendritic branching of IL2 neurons and dauer-specific nictation behavior. Under adverse environmental conditions, may promote dauer formation by processing insulin-like proteins ins-1 and ins-18, two daf-2/InsR antagonists. This chain is Furin-like protease kpc-1, found in Caenorhabditis elegans.